The sequence spans 201 residues: Putative 3-methyladenine DNA glycosylase (201 aa).

Belongs to the DNA glycosylase MPG family.

The polypeptide is Putative 3-methyladenine DNA glycosylase (Trichodesmium erythraeum (strain IMS101)).